Consider the following 417-residue polypeptide: NADH-quinone oxidoreductase subunit D (417 aa).

Belongs to the complex I 49 kDa subunit family. As to quaternary structure, NDH-1 is composed of 14 different subunits. Subunits NuoB, C, D, E, F, and G constitute the peripheral sector of the complex.

It is found in the cell inner membrane. The catalysed reaction is a quinone + NADH + 5 H(+)(in) = a quinol + NAD(+) + 4 H(+)(out). Functionally, NDH-1 shuttles electrons from NADH, via FMN and iron-sulfur (Fe-S) centers, to quinones in the respiratory chain. The immediate electron acceptor for the enzyme in this species is believed to be ubiquinone. Couples the redox reaction to proton translocation (for every two electrons transferred, four hydrogen ions are translocated across the cytoplasmic membrane), and thus conserves the redox energy in a proton gradient. This is NADH-quinone oxidoreductase subunit D from Halorhodospira halophila (strain DSM 244 / SL1) (Ectothiorhodospira halophila (strain DSM 244 / SL1)).